A 401-amino-acid polypeptide reads, in one-letter code: Phosrestin-1 (401 aa).

Phosphoserine; by CaMK is present on serine 366.

This sequence belongs to the arrestin family. Post-translationally, phosphorylated upon light exposure. As to expression, expressed in photoreceptor cells.

Its subcellular location is the cell projection. The protein resides in the rhabdomere. Its function is as follows. Regulates photoreceptor cell deactivation. Arr1 and Arr2 proteins are mediators of rhodopsin inactivation and are essential for the termination of the phototransduction cascade. Involved in regulating normal cycles of per nuclear accumulation in brain circadian neurons and thus is important for normal circadian behavior. In the dark, functions with Arr1 to promote the formation of cytosolic Bdbt foci, which are required for dco localization to photoreceptor nuclei where it phosphorylates and activates degradation of per. The sequence is that of Phosrestin-1 (Arr2) from Drosophila melanogaster (Fruit fly).